A 406-amino-acid polypeptide reads, in one-letter code: Imidazolonepropionase (406 aa).

2 residues coordinate Fe(3+): His72 and His74. His72 and His74 together coordinate Zn(2+). 4-imidazolone-5-propanoate contacts are provided by Arg81, Tyr144, and His177. An N-formimidoyl-L-glutamate-binding site is contributed by Tyr144. His242 provides a ligand contact to Fe(3+). His242 lines the Zn(2+) pocket. Gln245 contacts 4-imidazolone-5-propanoate. Asp317 is a binding site for Fe(3+). Residue Asp317 participates in Zn(2+) binding. Positions 319 and 321 each coordinate N-formimidoyl-L-glutamate. Thr322 is a binding site for 4-imidazolone-5-propanoate.

This sequence belongs to the metallo-dependent hydrolases superfamily. HutI family. Zn(2+) serves as cofactor. It depends on Fe(3+) as a cofactor.

Its subcellular location is the cytoplasm. The catalysed reaction is 4-imidazolone-5-propanoate + H2O = N-formimidoyl-L-glutamate. The protein operates within amino-acid degradation; L-histidine degradation into L-glutamate; N-formimidoyl-L-glutamate from L-histidine: step 3/3. Catalyzes the hydrolytic cleavage of the carbon-nitrogen bond in imidazolone-5-propanoate to yield N-formimidoyl-L-glutamate. It is the third step in the universal histidine degradation pathway. This is Imidazolonepropionase from Yersinia pseudotuberculosis serotype O:1b (strain IP 31758).